Here is a 791-residue protein sequence, read N- to C-terminus: uncharacterized protein (791 aa).

4 helical membrane passes run 104-124 (MWIL…FFLM), 131-151 (IAAI…YYII), 177-197 (ACLY…TLII), and 226-246 (WSGL…PSVL). Residue N265 is glycosylated (N-linked (GlcNAc...) asparagine). The next 8 helical transmembrane spans lie at 274-294 (FFIV…IFPA), 309-329 (SAVL…PLTL), 346-366 (WATC…LPGL), 421-441 (FIIN…SFFL), 471-491 (VHWG…FAFT), 501-521 (SYGF…LSLI), 533-553 (AFFE…LLYF), and 583-603 (LVAA…SAVT). A glycan (N-linked (GlcNAc...) asparagine) is linked at N621. Transmembrane regions (helical) follow at residues 653–673 (FVMW…LLQI), 697–717 (SVTG…NYLI), and 733–753 (AAAM…CVVY). A glycan (N-linked (GlcNAc...) asparagine) is linked at N759.

This sequence belongs to the oligopeptide OPT transporter family.

It is found in the membrane. This is an uncharacterized protein from Schizosaccharomyces pombe (strain 972 / ATCC 24843) (Fission yeast).